Reading from the N-terminus, the 308-residue chain is Aspartate carbamoyltransferase catalytic subunit (308 aa).

Carbamoyl phosphate contacts are provided by R59 and T60. K87 contributes to the L-aspartate binding site. Positions 109, 139, and 142 each coordinate carbamoyl phosphate. Residues R172 and R224 each coordinate L-aspartate. Residues A265 and P266 each contribute to the carbamoyl phosphate site.

The protein belongs to the aspartate/ornithine carbamoyltransferase superfamily. ATCase family. As to quaternary structure, heterododecamer (2C3:3R2) of six catalytic PyrB chains organized as two trimers (C3), and six regulatory PyrI chains organized as three dimers (R2).

It catalyses the reaction carbamoyl phosphate + L-aspartate = N-carbamoyl-L-aspartate + phosphate + H(+). The protein operates within pyrimidine metabolism; UMP biosynthesis via de novo pathway; (S)-dihydroorotate from bicarbonate: step 2/3. Its function is as follows. Catalyzes the condensation of carbamoyl phosphate and aspartate to form carbamoyl aspartate and inorganic phosphate, the committed step in the de novo pyrimidine nucleotide biosynthesis pathway. This is Aspartate carbamoyltransferase catalytic subunit from Enterococcus faecalis (strain ATCC 700802 / V583).